A 124-amino-acid chain; its full sequence is Large ribosomal subunit protein bL12 (124 aa).

This sequence belongs to the bacterial ribosomal protein bL12 family. In terms of assembly, homodimer. Part of the ribosomal stalk of the 50S ribosomal subunit. Forms a multimeric L10(L12)X complex, where L10 forms an elongated spine to which 2 to 4 L12 dimers bind in a sequential fashion. Binds GTP-bound translation factors.

Functionally, forms part of the ribosomal stalk which helps the ribosome interact with GTP-bound translation factors. Is thus essential for accurate translation. This Aromatoleum aromaticum (strain DSM 19018 / LMG 30748 / EbN1) (Azoarcus sp. (strain EbN1)) protein is Large ribosomal subunit protein bL12.